Here is a 1233-residue protein sequence, read N- to C-terminus: Structural maintenance of chromosomes protein 1A (1233 aa).

ATP is bound at residue Gly-32–Ser-39. 2 coiled-coil regions span residues Glu-104–Leu-124 and Glu-163–Ile-503. Residues Ile-284–Gln-293 are compositionally biased toward basic and acidic residues. Disordered stretches follow at residues Ile-284–His-307 and Phe-350–Glu-369. Ser-358 and Ser-360 each carry phosphoserine. Residues Val-515–Ala-629 form the SMC hinge domain. N6-acetyllysine is present on residues Lys-648 and Lys-713. Positions Lys-660–Met-935 form a coiled coil. The segment at Thr-946–Thr-969 is disordered. The span at Glu-953 to Gln-967 shows a compositional bias: low complexity. Residues Ser-957, Ser-962, Ser-966, and Ser-970 each carry the phosphoserine modification. Positions Lys-991 to Asp-1068 form a coiled coil. N6-acetyllysine is present on Lys-1037.

This sequence belongs to the SMC family. SMC1 subfamily. In terms of assembly, forms a heterodimer with SMC3 in cohesin complexes. Cohesin complexes are composed of the SMC1 (SMC1A or meiosis-specific SMC1B) and SMC3 heterodimer attached via their SMC hinge domain, RAD21 which link them, and one STAG protein (STAG1, STAG2 or meiosis-specific STAG3), which interacts with RAD21. In germ cell cohesin complexes, SMC1A is mutually exclusive with SMC1B. Found in a complex with CDCA5, SMC3 and RAD21, PDS5A/SCC-112 and PDS5B/APRIN. Interacts with STAG3, NDC80, BRAC1, BRAT1 and RPGR. Found in a complex containing POLE and SMC3. The cohesin complex interacts with the cohesin loading complex subunits NIPBL/Scc2 (via HEAT repeats) and MAU2/Scc4. NIPBL directly contacts all members of the complex, RAD21, SMC1A/B, SMC3 and STAG1. Interacts with SYCP2. Phosphorylated upon ionizing radiation or DNA methylation. Phosphorylation of Ser-957 and Ser-966 activates it and is required for S-phase checkpoint activation. In terms of processing, ubiquitinated by the DCX(DCAF15) complex, leading to its degradation.

The protein resides in the nucleus. Its subcellular location is the chromosome. Functionally, involved in chromosome cohesion during cell cycle and in DNA repair. Central component of cohesin complex. The cohesin complex is required for the cohesion of sister chromatids after DNA replication. The cohesin complex apparently forms a large proteinaceous ring within which sister chromatids can be trapped. At anaphase, the complex is cleaved and dissociates from chromatin, allowing sister chromatids to segregate. The cohesin complex may also play a role in spindle pole assembly during mitosis. Involved in DNA repair via its interaction with BRCA1 and its related phosphorylation by ATM, or via its phosphorylation by ATR. Works as a downstream effector both in the ATM/NBS1 branch and in the ATR/MSH2 branch of S-phase checkpoint. The sequence is that of Structural maintenance of chromosomes protein 1A (Smc1a) from Rattus norvegicus (Rat).